Consider the following 695-residue polypeptide: UvrABC system protein B (695 aa).

The Helicase ATP-binding domain maps to 31–414 (EGIESGLSFQ…EIQRSGQIAE (384 aa)). 44–51 (GVTGSGKT) contributes to the ATP binding site. The Beta-hairpin signature appears at 97–120 (YYDYYQPEAYVPSRDLFIEKDSSI). One can recognise a Helicase C-terminal domain in the interval 435 to 601 (QVDDLMSEVS…GVNKRIKDLI (167 aa)). One can recognise a UVR domain in the interval 632 to 667 (AKEIQRLEKSMLEAARNMEFEQAAQYRDEIKNLRSK).

Belongs to the UvrB family. Forms a heterotetramer with UvrA during the search for lesions. Interacts with UvrC in an incision complex.

It is found in the cytoplasm. Its function is as follows. The UvrABC repair system catalyzes the recognition and processing of DNA lesions. A damage recognition complex composed of 2 UvrA and 2 UvrB subunits scans DNA for abnormalities. Upon binding of the UvrA(2)B(2) complex to a putative damaged site, the DNA wraps around one UvrB monomer. DNA wrap is dependent on ATP binding by UvrB and probably causes local melting of the DNA helix, facilitating insertion of UvrB beta-hairpin between the DNA strands. Then UvrB probes one DNA strand for the presence of a lesion. If a lesion is found the UvrA subunits dissociate and the UvrB-DNA preincision complex is formed. This complex is subsequently bound by UvrC and the second UvrB is released. If no lesion is found, the DNA wraps around the other UvrB subunit that will check the other stand for damage. This is UvrABC system protein B from Nitrosomonas europaea (strain ATCC 19718 / CIP 103999 / KCTC 2705 / NBRC 14298).